The primary structure comprises 423 residues: MAAWGCVAALGAARGLCWRAARAAAGLQGRPARRCYAVGPAQSPPTFGFLLDIDGVLVRGHRVIPAALKAFRRLVNSQGQLRVPVVFVTNAGNILQHSKAQELSALLGCEVDADQVILSHSPMKLFSEYHEKRMLVSGQGPVMENAQGLGFRNVVTVDELRMAFPLLDMVDLERRLKTTPLPRNDFPRIEGVLLLGEPVRWETSLQLIMDVLLSNGSPGAGLATPPYPHLPVLASNMDLLWMAEAKMPRFGHGTFLLCLETIYQKVTGKELRYEGLMGKPSILTYQYAEDLIRRQAERRGWAAPIRKLYAVGDNPMSDVYGANLFHQYLQKATHDGAPELGAGGTRQQQPSASQSCISILVCTGVYNPRNPQSTEPVLGGGEPPFHGHRDLCFSPGLMEASHVVNDVNEAVQLVFRKEGWALE.

A signal peptide spans 1–23; it reads MAAWGCVAALGAARGLCWRAARA.

The protein belongs to the HAD-like hydrolase superfamily. Widely expressed.

The polypeptide is Haloacid dehalogenase-like hydrolase domain-containing 5 (Homo sapiens (Human)).